The following is a 615-amino-acid chain: Lipoprotein LpqB (615 aa).

Residues 1–29 (MGADRGRGGRRRPARVVAYAVGGVVLLAG) form the signal peptide. C30 is lipidated: N-palmitoyl cysteine. The S-diacylglycerol cysteine moiety is linked to residue C30. A disordered region spans residues 100–123 (PDESATVLAGGPGTESDHSGNRED). The span at 114–123 (ESDHSGNRED) shows a compositional bias: basic and acidic residues.

Belongs to the LpqB lipoprotein family.

It is found in the cell membrane. In Streptomyces coelicolor (strain ATCC BAA-471 / A3(2) / M145), this protein is Lipoprotein LpqB.